Reading from the N-terminus, the 116-residue chain is Large ribosomal subunit protein uL18 (116 aa).

It belongs to the universal ribosomal protein uL18 family. Part of the 50S ribosomal subunit; part of the 5S rRNA/L5/L18/L25 subcomplex. Contacts the 5S and 23S rRNAs.

Its function is as follows. This is one of the proteins that bind and probably mediate the attachment of the 5S RNA into the large ribosomal subunit, where it forms part of the central protuberance. This is Large ribosomal subunit protein uL18 from Chromohalobacter salexigens (strain ATCC BAA-138 / DSM 3043 / CIP 106854 / NCIMB 13768 / 1H11).